Here is a 456-residue protein sequence, read N- to C-terminus: Bifunctional protein GlmU (456 aa).

The segment at 1–229 (MLNNAMSVVI…LSEVEGVNNR (229 aa)) is pyrophosphorylase. UDP-N-acetyl-alpha-D-glucosamine-binding positions include 11–14 (LAAG), lysine 25, glutamine 76, 81–82 (GT), 103–105 (YGD), glycine 140, glutamate 154, asparagine 169, and asparagine 227. Aspartate 105 is a binding site for Mg(2+). Asparagine 227 provides a ligand contact to Mg(2+). Residues 230 to 250 (LQLSRLERVYQSEQAEKLLLA) are linker. The tract at residues 251-456 (GVMLRDPARF…EGWRRPVKKK (206 aa)) is N-acetyltransferase. Arginine 333 and lysine 351 together coordinate UDP-N-acetyl-alpha-D-glucosamine. The Proton acceptor role is filled by histidine 363. UDP-N-acetyl-alpha-D-glucosamine contacts are provided by tyrosine 366 and asparagine 377. Acetyl-CoA contacts are provided by residues alanine 380, 386-387 (NY), serine 405, alanine 423, and arginine 440.

It in the N-terminal section; belongs to the N-acetylglucosamine-1-phosphate uridyltransferase family. The protein in the C-terminal section; belongs to the transferase hexapeptide repeat family. As to quaternary structure, homotrimer. The cofactor is Mg(2+).

The protein localises to the cytoplasm. It carries out the reaction alpha-D-glucosamine 1-phosphate + acetyl-CoA = N-acetyl-alpha-D-glucosamine 1-phosphate + CoA + H(+). It catalyses the reaction N-acetyl-alpha-D-glucosamine 1-phosphate + UTP + H(+) = UDP-N-acetyl-alpha-D-glucosamine + diphosphate. Its pathway is nucleotide-sugar biosynthesis; UDP-N-acetyl-alpha-D-glucosamine biosynthesis; N-acetyl-alpha-D-glucosamine 1-phosphate from alpha-D-glucosamine 6-phosphate (route II): step 2/2. It functions in the pathway nucleotide-sugar biosynthesis; UDP-N-acetyl-alpha-D-glucosamine biosynthesis; UDP-N-acetyl-alpha-D-glucosamine from N-acetyl-alpha-D-glucosamine 1-phosphate: step 1/1. It participates in bacterial outer membrane biogenesis; LPS lipid A biosynthesis. Catalyzes the last two sequential reactions in the de novo biosynthetic pathway for UDP-N-acetylglucosamine (UDP-GlcNAc). The C-terminal domain catalyzes the transfer of acetyl group from acetyl coenzyme A to glucosamine-1-phosphate (GlcN-1-P) to produce N-acetylglucosamine-1-phosphate (GlcNAc-1-P), which is converted into UDP-GlcNAc by the transfer of uridine 5-monophosphate (from uridine 5-triphosphate), a reaction catalyzed by the N-terminal domain. This chain is Bifunctional protein GlmU, found in Shigella dysenteriae serotype 1 (strain Sd197).